A 293-amino-acid polypeptide reads, in one-letter code: 4-diphosphocytidyl-2-C-methyl-D-erythritol kinase (293 aa).

Residue lysine 16 is part of the active site. ATP is bound at residue 99-109 (PMGAGLGGGSS). Residue aspartate 141 is part of the active site.

The protein belongs to the GHMP kinase family. IspE subfamily.

The enzyme catalyses 4-CDP-2-C-methyl-D-erythritol + ATP = 4-CDP-2-C-methyl-D-erythritol 2-phosphate + ADP + H(+). It functions in the pathway isoprenoid biosynthesis; isopentenyl diphosphate biosynthesis via DXP pathway; isopentenyl diphosphate from 1-deoxy-D-xylulose 5-phosphate: step 3/6. Its function is as follows. Catalyzes the phosphorylation of the position 2 hydroxy group of 4-diphosphocytidyl-2C-methyl-D-erythritol. This chain is 4-diphosphocytidyl-2-C-methyl-D-erythritol kinase, found in Paraburkholderia xenovorans (strain LB400).